Reading from the N-terminus, the 509-residue chain is Meiotically up-regulated gene 157 protein (509 aa).

5 helical membrane passes run 4-24 (WQAI…NIPW), 140-160 (LATL…QFPY), 296-316 (ACVL…LSHL), 368-388 (ILFM…LGFV), and 417-437 (ISGI…SLIV).

It is found in the endoplasmic reticulum membrane. In terms of biological role, has a role in meiosis. In Schizosaccharomyces pombe (strain 972 / ATCC 24843) (Fission yeast), this protein is Meiotically up-regulated gene 157 protein (mug157).